Reading from the N-terminus, the 186-residue chain is Chromosomal replication initiator protein DnaA (186 aa).

Position 1 (Glu1) is a region of interest, domain I, interacts with DnaA modulators. Residue Glu1 is a region of interest, domain II. Residues 1-99 (EFFKTFNALI…GALNKVTHTS (99 aa)) are domain III, AAA+ region. The domain IV, binds dsDNA stretch occupies residues 100-186 (LIGRSMTVES…GRNFGGRDHT (87 aa)).

This sequence belongs to the DnaA family. As to quaternary structure, oligomerizes as a right-handed, spiral filament on DNA at oriC.

The protein resides in the cytoplasm. Its function is as follows. Plays an essential role in the initiation and regulation of chromosomal replication. ATP-DnaA binds to the origin of replication (oriC) to initiate formation of the DNA replication initiation complex once per cell cycle. Binds the DnaA box (a 9 base pair repeat at the origin) and separates the double-stranded (ds)DNA. Forms a right-handed helical filament on oriC DNA; dsDNA binds to the exterior of the filament while single-stranded (ss)DNA is stabiized in the filament's interior. The ATP-DnaA-oriC complex binds and stabilizes one strand of the AT-rich DNA unwinding element (DUE), permitting loading of DNA polymerase. After initiation quickly degrades to an ADP-DnaA complex that is not apt for DNA replication. Binds acidic phospholipids. The polypeptide is Chromosomal replication initiator protein DnaA (Wolbachia sp).